We begin with the raw amino-acid sequence, 365 residues long: uncharacterized protein (365 aa).

29 to 36 is an ATP binding site; the sequence is GPLNSGKS.

It belongs to the archaeal ATPase family.

This is an uncharacterized protein from Methanocaldococcus jannaschii (strain ATCC 43067 / DSM 2661 / JAL-1 / JCM 10045 / NBRC 100440) (Methanococcus jannaschii).